The sequence spans 151 residues: UPF0178 protein PMI1258 (151 aa).

The protein belongs to the UPF0178 family.

The chain is UPF0178 protein PMI1258 from Proteus mirabilis (strain HI4320).